The sequence spans 107 residues: Ribosome-associated factor Y (107 aa).

The segment at 85 to 107 (LNKLQHKSESRRADERLKDSFEN) is disordered.

Associates mainly with 70S ribosomes.

Functionally, during stationary phase, prevents 70S dimer formation, probably in order to regulate translation efficiency during transition between the exponential and the stationary phases. In addition, during environmental stress such as cold shock or excessive cell density at stationary phase, stabilizes the 70S ribosome against dissociation, inhibits translation initiation and increase translation accuracy. When normal growth conditions are restored, is quickly released from the ribosome. This Haemophilus influenzae (strain ATCC 51907 / DSM 11121 / KW20 / Rd) protein is Ribosome-associated factor Y.